Reading from the N-terminus, the 21-residue chain is Nigrocin-2 (21 aa).

Cys15 and Cys21 form a disulfide bridge.

Expressed by the skin dorsal glands.

The protein resides in the secreted. Its function is as follows. Thanks to its single linear amphipathic alpha-helix, may integrate into membrane phospholipids, leading to lysis of the membrane. Shows antibacterial activity against both Gram-positive and Gram-negative bacteria and against the fungus C.albicans. Has no hemolytic activity. The polypeptide is Nigrocin-2 (Pelophylax nigromaculatus (Black-spotted frog)).